We begin with the raw amino-acid sequence, 215 residues long: Ras-related protein Rab-5A (215 aa).

GTP contacts are provided by serine 29, alanine 30, glycine 32, lysine 33, serine 34, serine 35, histidine 46, glutamate 47, threonine 52, and glycine 78. Serine 34 contacts Mg(2+). 2 short sequence motifs (switch) span residues 44–56 (QFHEFQESTIGAA) and 77–93 (AGQERYHSLAPMYYRGA). Position 52 (threonine 52) interacts with Mg(2+). Serine 84 carries the post-translational modification Phosphoserine. 5 residues coordinate GTP: asparagine 133, lysine 134, aspartate 136, alanine 164, and lysine 165. Positions 181-215 (LPKNEPQNPGANSARGRGVDLTEPAQPARSQCCSN) are disordered. 2 S-geranylgeranyl cysteine lipidation sites follow: cysteine 212 and cysteine 213.

Belongs to the small GTPase superfamily. Rab family. In terms of assembly, interacts with GDI1; this promotes dissociation from membranes; phosphorylation at Ser-84 disrupts this interaction. Interacts with GDI2; phosphorylation at Ser-84 disrupts the interaction. Interacts with EEA1. Interacts with RIN1 and GAPVD1, which regulate its pathway, probably by acting as a GEF. Interacts with RINL. Interacts with ALS2CL, SUN2, ZFYVE20 and RUFY1. Interacts with RABEP1; one RABEP1 homodimer binds two RAB5A chains, but at opposite sides of the dimer. Interacts with SGSM1 and SGSM3. Interacts with PIK3CB. Interacts with OCRL and INPP5F. May be a component of a complex composed of RAB5A, DYN2 and PIK3C3. Does not interact with BLOC-3 complex (heterodimer of HPS1 and HPS4). Interacts with CLN5. Interacts with APPL2. Interacts with F8A1/F8A2/F8A3. Found in a complex with F8A1/F8A2/F8A3, HTT and RAB5A; mediates the recruitment of HTT by RAB5A onto early endosomes. Interacts with ATP9A. Interacts with PPP1R21; mediates the recruitment of FERRY complex by RAB5A onto early endosomes. Mg(2+) serves as cofactor. Post-translationally, phosphorylation of Ser-84 in the switch II region by LRRK2 prevents the association of RAB regulatory proteins, including RAB GDP dissociation inhibitors GDI1 and GDI2.

The protein localises to the cell membrane. Its subcellular location is the early endosome membrane. It is found in the melanosome. The protein resides in the cytoplasmic vesicle. It localises to the cell projection. The protein localises to the ruffle. Its subcellular location is the membrane. It is found in the cytoplasm. The protein resides in the cytosol. It localises to the phagosome membrane. The protein localises to the endosome membrane. It catalyses the reaction GTP + H2O = GDP + phosphate + H(+). Its activity is regulated as follows. Regulated by guanine nucleotide exchange factors (GEFs) including RINL, which promote the exchange of bound GDP for free GTP. Regulated by GTPase activating proteins (GAPs) which increase the GTP hydrolysis activity. Inhibited by GDP dissociation inhibitors (GDIs). Functionally, the small GTPases Rab are key regulators of intracellular membrane trafficking, from the formation of transport vesicles to their fusion with membranes. Rabs cycle between an inactive GDP-bound form and an active GTP-bound form that is able to recruit to membranes different sets of downstream effectors directly responsible for vesicle formation, movement, tethering and fusion. RAB5A is required for the fusion of plasma membranes and early endosomes. Contributes to the regulation of filopodia extension. Required for the exosomal release of SDCBP, CD63, PDCD6IP and syndecan. Regulates maturation of apoptotic cell-containing phagosomes, probably downstream of DYN2 and PIK3C3. This Mus musculus (Mouse) protein is Ras-related protein Rab-5A.